A 113-amino-acid chain; its full sequence is uncharacterized protein (113 aa).

This is an uncharacterized protein from Acanthamoeba polyphaga mimivirus (APMV).